The chain runs to 104 residues: Late embryogenis abundant protein 41 (104 aa).

Residues 1–31 (MAARSLSGAVKSLCSAASGSLSCSIVLRRSY) constitute a mitochondrion transit peptide.

The protein belongs to the LEA type 3 family.

The protein resides in the mitochondrion. The polypeptide is Late embryogenis abundant protein 41 (Arabidopsis thaliana (Mouse-ear cress)).